A 286-amino-acid polypeptide reads, in one-letter code: E3 SUMO-protein ligase K-bZIP (286 aa).

Disordered stretches follow at residues 1–22 (MPRM…EKDE) and 106–130 (WTLS…SKRR).

Interacts with host HDAC1 and HDAC2, these interactions suppress HDAC activities. Interacts with protein ORF57. Interacts with protein vPK. Sumoylated.

It participates in protein modification; protein sumoylation. SUMO E3 ligase that plays a role in viral gene regulation and is essential for viral reactivation. Disrupts host G1 cell cycle control thus allowing viral transcription and translation to proceed at the early stages of infection. Catalyzes its own SUMO modification as well as that of its interacting partners such as host TP53 and RB1. Regulates viral gene expression and reactivation and may mediate the SUMOylation of viral promoters in the low methylated 'Lys-9' histone H3 (H3K9me) region which results in a diminution of viral gene expression after reactivation. SUMOylates also host histone lysine demethylase 4A/KDM4A, an essential step for complete enrichment of SUMO-2/3 on the viral genome during viral transactivation and reactivation. The sequence is that of E3 SUMO-protein ligase K-bZIP (K8) from Human herpesvirus 8 type P (isolate GK18) (HHV-8).